The following is a 236-amino-acid chain: Small ribosomal subunit protein eS6 (236 aa).

The protein belongs to the eukaryotic ribosomal protein eS6 family. In terms of assembly, component of the small ribosomal subunit. Part of the small subunit (SSU) processome, composed of more than 70 proteins and the RNA chaperone small nucleolar RNA (snoRNA) U3. In terms of processing, ribosomal protein S6 is the major substrate of protein kinases in eukaryote ribosomes.

The protein localises to the cytoplasm. The protein resides in the nucleus. It is found in the nucleolus. Functionally, component of the 40S small ribosomal subunit. Plays an important role in controlling cell growth and proliferation through the selective translation of particular classes of mRNA. Part of the small subunit (SSU) processome, first precursor of the small eukaryotic ribosomal subunit. During the assembly of the SSU processome in the nucleolus, many ribosome biogenesis factors, an RNA chaperone and ribosomal proteins associate with the nascent pre-rRNA and work in concert to generate RNA folding, modifications, rearrangements and cleavage as well as targeted degradation of pre-ribosomal RNA by the RNA exosome. The protein is Small ribosomal subunit protein eS6 (rps6) of Dictyostelium discoideum (Social amoeba).